Here is a 105-residue protein sequence, read N- to C-terminus: Host transcription reprogramming factor 7 (105 aa).

The N-terminal stretch at 1 to 19 (MKTKTIFQLVALFAIGATA) is a signal peptide. The segment at 69 to 95 (YWCRIGNCNAAFKSLAARCRHEKTAVH) adopts a C2H2-type zinc-finger fold.

The protein resides in the secreted. It localises to the host nucleus. In terms of biological role, probable secreted effector that translocates into the nuclei of host cells to reprogram the expression of targeted genes by binding on effector binding elements in rice. This Pyricularia oryzae (strain 70-15 / ATCC MYA-4617 / FGSC 8958) (Rice blast fungus) protein is Host transcription reprogramming factor 7.